Here is a 153-residue protein sequence, read N- to C-terminus: uncharacterized protein (153 aa).

2 consecutive transmembrane segments (helical) span residues 1-21 and 106-126; these read MAATPAAIEVSLTIVFVLFFS and IVPIPFYCISKAQECFLTVYI.

It is found in the membrane. This is an uncharacterized protein from Saccharomyces cerevisiae (strain ATCC 204508 / S288c) (Baker's yeast).